The sequence spans 315 residues: Probable NAD(P)H-dependent D-xylose reductase xyl1 (315 aa).

Tyr-50 functions as the Proton donor in the catalytic mechanism. His-112 lines the substrate pocket. NAD(+) contacts are provided by residues 166 to 167, 215 to 224, and 271 to 281; these read SN, SSFGPLSFVE, and KSNDPTRLAQN.

The protein belongs to the aldo/keto reductase family.

The enzyme catalyses xylitol + NAD(+) = D-xylose + NADH + H(+). It carries out the reaction xylitol + NADP(+) = D-xylose + NADPH + H(+). It functions in the pathway carbohydrate metabolism; D-xylose degradation. Catalyzes the initial reaction in the xylose utilization pathway by reducing D-xylose into xylitol. Xylose is a major component of hemicelluloses such as xylan. Most fungi utilize D-xylose via three enzymatic reactions, xylose reductase (XR), xylitol dehydrogenase (XDH), and xylulokinase, to form xylulose 5-phosphate, which enters pentose phosphate pathway. The chain is Probable NAD(P)H-dependent D-xylose reductase xyl1 (xyl1) from Aspergillus fumigatus (strain ATCC MYA-4609 / CBS 101355 / FGSC A1100 / Af293) (Neosartorya fumigata).